A 539-amino-acid chain; its full sequence is CTP synthase (539 aa).

The segment at 1–268 (MADTKYIFVT…DETVLRKVGL (268 aa)) is amidoligase domain. A CTP-binding site is contributed by Ser15. Residue Ser15 coordinates UTP. Position 16-21 (16-21 (SLGKGI)) interacts with ATP. An L-glutamine-binding site is contributed by Tyr56. Asp73 serves as a coordination point for ATP. The Mg(2+) site is built by Asp73 and Glu143. Residues 150 to 152 (DIE), 189 to 194 (KTKPTQ), and Lys225 contribute to the CTP site. Residues 189 to 194 (KTKPTQ) and Lys225 each bind UTP. One can recognise a Glutamine amidotransferase type-1 domain in the interval 294-536 (TIALVGKYVE…IREAIKTRKK (243 aa)). Gly356 is a binding site for L-glutamine. The active-site Nucleophile; for glutamine hydrolysis is Cys383. L-glutamine-binding positions include 384-387 (LGMQ), Glu407, and Arg464. Catalysis depends on residues His509 and Glu511.

It belongs to the CTP synthase family. Homotetramer.

It catalyses the reaction UTP + L-glutamine + ATP + H2O = CTP + L-glutamate + ADP + phosphate + 2 H(+). The enzyme catalyses L-glutamine + H2O = L-glutamate + NH4(+). It carries out the reaction UTP + NH4(+) + ATP = CTP + ADP + phosphate + 2 H(+). The protein operates within pyrimidine metabolism; CTP biosynthesis via de novo pathway; CTP from UDP: step 2/2. Its activity is regulated as follows. Allosterically activated by GTP, when glutamine is the substrate; GTP has no effect on the reaction when ammonia is the substrate. The allosteric effector GTP functions by stabilizing the protein conformation that binds the tetrahedral intermediate(s) formed during glutamine hydrolysis. Inhibited by the product CTP, via allosteric rather than competitive inhibition. Catalyzes the ATP-dependent amination of UTP to CTP with either L-glutamine or ammonia as the source of nitrogen. Regulates intracellular CTP levels through interactions with the four ribonucleotide triphosphates. This Porphyromonas gingivalis (strain ATCC 33277 / DSM 20709 / CIP 103683 / JCM 12257 / NCTC 11834 / 2561) protein is CTP synthase.